Consider the following 286-residue polypeptide: PTS system mannose-specific EIID component (286 aa).

Met-1 carries the N-formylmethionine modification. Residues 1–17 (MSEMVDTTQTTTEKKLT) lie on the Cytoplasmic side of the membrane. The region spanning 14–284 (KKLTQSDIRG…GIAGYACGLL (271 aa)) is the PTS EIID domain. An intramembrane segment occupies 18 to 55 (QSDIRGVFLRSNLFQGSWNFERMQALGFCFSMVPAIRR). The Cytoplasmic segment spans residues 56–62 (LYPENNE). Residues 63–95 (ARKQAIRRHLEFFNTQPFVAAPILGVTLALEEQ) lie within the membrane without spanning it. At 96–103 (RANGAEID) the chain is on the cytoplasmic side. A transmembrane helix spans residues 104–143 (DGAINGIKVGLMGPLAGVGDPIFWGTVRPVFAALGAGIAM). Residues 144–147 (SGSL) are Periplasmic-facing. The hydrophobic stretch at 148-176 (LGPLLFFILFNLVRLATRYYGVAYGYSKG) threads the membrane. The Cytoplasmic segment spans residues 177–186 (IDIVKDMGGG). The chain crosses the lipid bilayer at residues 187-212 (FLQKLTEGASILGLFVMGALVNKWTH). Topologically, residues 213 to 244 (VNIPLVVSRITDQTGKEHVTTVQTILDQLMPG) are periplasmic. The segment at 245 to 258 (LVPLLLTFACMWLL) is a transmembrane helix. Residues 259–264 (RKKVNP) lie on the Cytoplasmic side of the membrane. A transmembrane span lies at residues 265–283 (LWIIVGFFVIGIAGYACGL). The Periplasmic portion of the chain corresponds to 284-286 (LGL).

As to quaternary structure, homotrimer of protomers that are composed of two subunits, IIC and IID.

It is found in the cell inner membrane. In terms of biological role, the phosphoenolpyruvate-dependent sugar phosphotransferase system (sugar PTS), a major carbohydrate active transport system, catalyzes the phosphorylation of incoming sugar substrates concomitantly with their translocation across the cell membrane. The enzyme II ManXYZ PTS system is involved in mannose transport. The protein is PTS system mannose-specific EIID component (manZ) of Escherichia coli O6:H1 (strain CFT073 / ATCC 700928 / UPEC).